We begin with the raw amino-acid sequence, 314 residues long: Zinc transporter ZIP3 (314 aa).

Residues methionine 1–leucine 3 lie on the Extracellular side of the membrane. Residues isoleucine 4 to isoleucine 24 traverse the membrane as a helical segment. Residues proline 25 to lysine 41 are Cytoplasmic-facing. A helical membrane pass occupies residues isoleucine 42–leucine 62. At leucine 63 to proline 84 the chain is on the extracellular side. Residues leucine 85–methionine 105 form a helical membrane-spanning segment. Topologically, residues threonine 106–arginine 169 are cytoplasmic. A helical transmembrane segment spans residues leucine 170–leucine 190. At glutamine 191–lysine 196 the chain is on the extracellular side. The helical transmembrane segment at leucine 197 to valine 217 threads the bilayer. Topologically, residues serine 218–alanine 229 are cytoplasmic. The helical transmembrane segment at isoleucine 230–isoleucine 250 threads the bilayer. Residues glutamine 251–serine 262 are Extracellular-facing. A helical membrane pass occupies residues alanine 263–valine 283. Residues lysine 284 to arginine 292 lie on the Cytoplasmic side of the membrane. Residues leucine 293 to lysine 313 form a helical membrane-spanning segment. Position 314 (tryptophan 314) is a topological domain, extracellular.

This sequence belongs to the ZIP transporter (TC 2.A.5) family.

Its subcellular location is the cell membrane. It localises to the apical cell membrane. The catalysed reaction is Zn(2+)(in) = Zn(2+)(out). Transporter for the divalent cation Zn(2+). Mediates the influx of Zn(2+) into cells from extracellular space. This Xenopus tropicalis (Western clawed frog) protein is Zinc transporter ZIP3 (slc39a3).